Here is a 205-residue protein sequence, read N- to C-terminus: Deoxyuridine 5'-triphosphate nucleotidohydrolase (205 aa).

Ser-54 bears the Phosphoserine mark. Residues 126–128, 140–143, Gly-151, and 199–200 each bind substrate; these read RSG, GVID, and FG.

Belongs to the dUTPase family. As to quaternary structure, homotrimer. Mg(2+) serves as cofactor. As to expression, expressed in all tissues examined. Higher levels in heart and kidney.

The protein resides in the cytoplasm. It is found in the nucleus. The enzyme catalyses dUTP + H2O = dUMP + diphosphate + H(+). Its pathway is pyrimidine metabolism; dUMP biosynthesis; dUMP from dCTP (dUTP route): step 2/2. Catalyzes the cleavage of 2'-deoxyuridine 5'-triphosphate (dUTP) into 2'-deoxyuridine 5'-monophosphate (dUMP) and inorganic pyrophosphate and through its action efficiently prevents uracil misincorporation into DNA and at the same time provides dUMP, the substrate for de novo thymidylate biosynthesis. Inhibits peroxisome proliferator-activated receptor (PPAR) activity by binding of its N-terminal to PPAR, preventing the latter's dimerization with retinoid X receptor. Essential for embryonic development. This Rattus norvegicus (Rat) protein is Deoxyuridine 5'-triphosphate nucleotidohydrolase (Dut).